Consider the following 319-residue polypeptide: Methionyl-tRNA formyltransferase (319 aa).

110-113 serves as a coordination point for (6S)-5,6,7,8-tetrahydrofolate; that stretch reads SLLP.

It belongs to the Fmt family.

The enzyme catalyses L-methionyl-tRNA(fMet) + (6R)-10-formyltetrahydrofolate = N-formyl-L-methionyl-tRNA(fMet) + (6S)-5,6,7,8-tetrahydrofolate + H(+). Attaches a formyl group to the free amino group of methionyl-tRNA(fMet). The formyl group appears to play a dual role in the initiator identity of N-formylmethionyl-tRNA by promoting its recognition by IF2 and preventing the misappropriation of this tRNA by the elongation apparatus. This Geobacillus thermodenitrificans (strain NG80-2) protein is Methionyl-tRNA formyltransferase.